Here is a 105-residue protein sequence, read N- to C-terminus: Met repressor (105 aa).

Belongs to the MetJ family. As to quaternary structure, homodimer.

The protein resides in the cytoplasm. Functionally, this regulatory protein, when combined with SAM (S-adenosylmethionine) represses the expression of the methionine regulon and of enzymes involved in SAM synthesis. The sequence is that of Met repressor from Vibrio cholerae serotype O1 (strain ATCC 39541 / Classical Ogawa 395 / O395).